Consider the following 476-residue polypeptide: Glycogen synthase (476 aa).

Lysine 15 provides a ligand contact to ADP-alpha-D-glucose.

It belongs to the glycosyltransferase 1 family. Bacterial/plant glycogen synthase subfamily.

The enzyme catalyses [(1-&gt;4)-alpha-D-glucosyl](n) + ADP-alpha-D-glucose = [(1-&gt;4)-alpha-D-glucosyl](n+1) + ADP + H(+). It functions in the pathway glycan biosynthesis; glycogen biosynthesis. Synthesizes alpha-1,4-glucan chains using ADP-glucose. This chain is Glycogen synthase, found in Ligilactobacillus salivarius (strain UCC118) (Lactobacillus salivarius).